A 100-amino-acid chain; its full sequence is Vesicle-associated membrane protein 8 (100 aa).

Residue M1 is modified to N-acetylmethionine. Topologically, residues 1 to 75 are cytoplasmic; the sequence is MEEASEGGGN…ARKFWWKNVK (75 aa). 2 positions are modified to phosphoserine: S5 and S18. The v-SNARE coiled-coil homology domain maps to 12-72; that stretch reads RVRNLQSEVE…QKVARKFWWK (61 aa). Residues T28, T48, and T54 each carry the phosphothreonine modification. A Phosphoserine modification is found at S55. Residues K64 and K68 are each lipidated ((Microbial infection) N6-stearoyl lysine). The helical; Anchor for type IV membrane protein transmembrane segment at 76–96 threads the bilayer; sequence MIVLICVIVFIIILFIVLFAT. The Vesicular portion of the chain corresponds to 97-100; sequence GAFS.

It belongs to the synaptobrevin family. In terms of assembly, forms a SNARE complex composed of VAMP8, SNAP29 and STX17 involved in fusion of autophagosome with lysosome. Found in a number of SNARE complexes with NAPA, SNAP23, SNAP25, STX1A, STX4, STX7, STX8 and VTI1B. Interacts with PICALM. SNARE complex formation and binding by PICALM are mutually exclusive processes for VAMP8. Interacts with SBF2/MTMR13. Interacts with RAB21 (in GTP-bound form) in response to starvation; the interaction probably regulates VAMP8 endolysosomal trafficking. Interacts with STX17; this interaction is increased in the absence of TMEM39A. Interacts with TRIM6. As to quaternary structure, (Microbial infection) The interaction with STX17 is decreased in presence of SARS coronavirus-2/SARS-CoV-2 ORF3A protein. (Microbial infection) Stearoylated By S.flexneri N-epsilon-fatty acyltransferase IcsB, thereby disrupting the host actin cytoskeleton. As to expression, platelets.

The protein localises to the lysosome membrane. Its subcellular location is the early endosome membrane. The protein resides in the late endosome membrane. It localises to the cell membrane. It is found in the zymogen granule membrane. Functionally, SNAREs, soluble N-ethylmaleimide-sensitive factor-attachment protein receptors, are essential proteins for fusion of cellular membranes. SNAREs localized on opposing membranes assemble to form a trans-SNARE complex, an extended, parallel four alpha-helical bundle that drives membrane fusion. VAMP8 is a SNARE involved in autophagy through the direct control of autophagosome membrane fusion with the lysososome membrane via its interaction with the STX17-SNAP29 binary t-SNARE complex. Also required for dense-granule secretion in platelets. Also plays a role in regulated enzyme secretion in pancreatic acinar cells. Involved in the abscission of the midbody during cell division, which leads to completely separate daughter cells. Involved in the homotypic fusion of early and late endosomes. Also participates in the activation of type I interferon antiviral response through a TRIM6-dependent mechanism. This Homo sapiens (Human) protein is Vesicle-associated membrane protein 8.